The following is an 88-amino-acid chain: Small ribosomal subunit protein bS20 (88 aa).

The span at 1-21 (MANSKSAKKRALQSEKRRQHN) shows a compositional bias: basic residues. Residues 1 to 26 (MANSKSAKKRALQSEKRRQHNASRSS) form a disordered region.

Belongs to the bacterial ribosomal protein bS20 family.

Binds directly to 16S ribosomal RNA. In Shewanella halifaxensis (strain HAW-EB4), this protein is Small ribosomal subunit protein bS20.